The following is a 303-amino-acid chain: 1D-myo-inositol 2-acetamido-2-deoxy-alpha-D-glucopyranoside deacetylase (303 aa).

Positions 15, 18, and 157 each coordinate Zn(2+).

It belongs to the MshB deacetylase family. The cofactor is Zn(2+).

The catalysed reaction is 1D-myo-inositol 2-acetamido-2-deoxy-alpha-D-glucopyranoside + H2O = 1D-myo-inositol 2-amino-2-deoxy-alpha-D-glucopyranoside + acetate. Catalyzes the deacetylation of 1D-myo-inositol 2-acetamido-2-deoxy-alpha-D-glucopyranoside (GlcNAc-Ins) in the mycothiol biosynthesis pathway. This is 1D-myo-inositol 2-acetamido-2-deoxy-alpha-D-glucopyranoside deacetylase from Kribbella flavida (strain DSM 17836 / JCM 10339 / NBRC 14399).